Here is a 326-residue protein sequence, read N- to C-terminus: Fructose-1,6-bisphosphatase class 1 2 (326 aa).

Mg(2+)-binding residues include glutamate 84, aspartate 103, leucine 105, and aspartate 106. Substrate-binding positions include 106 to 109 (DGSS), asparagine 198, and lysine 262. Glutamate 268 lines the Mg(2+) pocket.

Belongs to the FBPase class 1 family. As to quaternary structure, homotetramer. Mg(2+) serves as cofactor.

It localises to the cytoplasm. The catalysed reaction is beta-D-fructose 1,6-bisphosphate + H2O = beta-D-fructose 6-phosphate + phosphate. The protein operates within carbohydrate biosynthesis; gluconeogenesis. This is Fructose-1,6-bisphosphatase class 1 2 from Pseudoalteromonas translucida (strain TAC 125).